Consider the following 568-residue polypeptide: Methionine--tRNA ligase (568 aa).

Residues 10–20 (PYVQSVPHLGN) carry the 'HIGH' region motif. Positions 143, 146, 156, and 159 each coordinate Zn(2+). The 'KMSKS' region motif lies at 333-337 (KFSKS). Residue Lys-336 participates in ATP binding.

It belongs to the class-I aminoacyl-tRNA synthetase family. MetG type 1 subfamily. It depends on Zn(2+) as a cofactor.

Its subcellular location is the cytoplasm. The enzyme catalyses tRNA(Met) + L-methionine + ATP = L-methionyl-tRNA(Met) + AMP + diphosphate. In terms of biological role, is required not only for elongation of protein synthesis but also for the initiation of all mRNA translation through initiator tRNA(fMet) aminoacylation. This chain is Methionine--tRNA ligase, found in Metallosphaera sedula (strain ATCC 51363 / DSM 5348 / JCM 9185 / NBRC 15509 / TH2).